Consider the following 238-residue polypeptide: Probable transcriptional regulatory protein IL0164 (238 aa).

The protein belongs to the TACO1 family.

Its subcellular location is the cytoplasm. The polypeptide is Probable transcriptional regulatory protein IL0164 (Idiomarina loihiensis (strain ATCC BAA-735 / DSM 15497 / L2-TR)).